A 1060-amino-acid chain; its full sequence is Centrosomal protein of 131 kDa (1060 aa).

The span at 1 to 11 (MKGSRTITATP) shows a compositional bias: polar residues. The disordered stretch occupies residues 1 to 96 (MKGSRTITAT…TGSPRPAEPT (96 aa)). Residues 1 to 244 (MKGSRTITAT…SQSARGTTGL (244 aa)) are interaction with PLK4. A phosphoserine mark is found at S14 and S35. Composition is skewed to polar residues over residues 32-50 (RPGS…SVAT) and 73-88 (LRRS…SWTG). The residue at position 47 (S47) is a Phosphoserine; by MAPKAPK2. Residue S78 is modified to Phosphoserine; by MAPKAPK2 and PLK4. Phosphoserine is present on residues S89, S105, S114, S146, and S150. Disordered stretches follow at residues 136–155 (LALP…LGPR) and 217–248 (EGGE…LRRR). Positions 217 to 226 (EGGEGSDLGK) are enriched in basic and acidic residues. The region spanning 263–283 (NQAAVTIQRWYRCQVQRRRAG) is the IQ domain. Composition is skewed to basic and acidic residues over residues 314–327 (EEAA…EKAR) and 344–363 (KASE…RAPE). Positions 314–437 (EEAARKKARE…VSGSSRGKAR (124 aa)) are disordered. Low complexity predominate over residues 398-408 (ASESSPEQWQS). A compositionally biased stretch (basic and acidic residues) spans 409-424 (PEDKPQDIHSQGEARQ). T473 bears the Phosphothreonine mark. The residue at position 481 (S481) is a Phosphoserine.

This sequence belongs to the CEP131 family. Self-associates. Associates with the centriolar satellite BBSome protein complex Interacts with BBS4; the interaction limits BBS4 availability for association with the BBSome complex, and hence negatively regulates ciliary localization of the BBSome complex. Interacts with MIB1. Interacts with PCM1; the interaction increases in response to ultraviolet light (UV) radiation. Associates with microtubule; association to microtubule is reduced in response to cellular stress, such as UV stimulation, in a process that requires p38 MAP kinase signaling. Interacts with CEP290, DCTN1, MAP1LC3B, PCNT, PCM1 and CEP152. Interacts with 14-3-3 proteins following UV-induced phosphorylation by MAPKAPK2; this inhibits formation of novel centriolar satellites. Interacts with SDCCAG8. Interacts with CCDC61. Interacts with PLK4. In terms of processing, ubiquitinated. Undergoes monoubiquitination catalyzed by the E3 ubiquitin-protein ligase MIB1 in proliferating cells, preventing cilia formation. Monoubiquitination by MIB1 is inhibited in response to cellular stress, such as ultraviolet light (UV) radiation or heat shock, resulting in ciliogenesis restoration. MAPKAPK2-dependent phosphorylation at Ser-47 and Ser-78 occurs in response to cellular stress such as exposure to ultraviolet irradiation and promotes binding to 14-3-3 proteins which leads to cytoplasmic sequestration of CEP131 and blocks formation of new centriolar satellites. Phosphorylation at Ser-78 mediated by PLK4 is essential for proper organization and integrity of centriolar satellites but is dispensable for its localization to centrioles and its function in ciliogenesis. Localized to the pre-acrosome region of round and elongated spermatids in testis but also present in ovary, brain and adipose tissue.

Its subcellular location is the cytoplasm. It localises to the cytoskeleton. The protein localises to the microtubule organizing center. The protein resides in the centrosome. It is found in the centriolar satellite. Its subcellular location is the centriole. It localises to the cilium basal body. The protein localises to the cytoplasmic vesicle. The protein resides in the secretory vesicle. It is found in the acrosome. Its function is as follows. Component of centriolar satellites contributing to the building of a complex and dynamic network required to regulate cilia/flagellum formation. In proliferating cells, MIB1-mediated ubiquitination induces its sequestration within centriolar satellites, precluding untimely cilia formation initiation. In contrast, during normal and ultraviolet or heat shock cellular stress-induced ciliogenesis, its non-ubiquitinated form is rapidly displaced from centriolar satellites and recruited to centrosome/basal bodies in a microtubule- and p38 MAPK-dependent manner. Also acts as a negative regulator of BBSome ciliary trafficking. Plays a role in sperm flagellar formation; may be involved in the regulation of intraflagellar transport (IFT) and/or intramanchette (IMT) trafficking, which are important for axoneme extension and/or cargo delivery to the nascent sperm tail. Required for optimal cell proliferation and cell cycle progression; may play a role in the regulation of genome stability and centriole duplication in non-ciliogenic cells. Involved in centriole duplication. Required for CEP152, WDR62 and CEP63 centrosomal localization and promotes the centrosomal localization of CDK2. Essential for maintaining proper centriolar satellite integrity. This chain is Centrosomal protein of 131 kDa (Cep131), found in Mus musculus (Mouse).